We begin with the raw amino-acid sequence, 286 residues long: 4-diphosphocytidyl-2-C-methyl-D-erythritol kinase (286 aa).

K13 is an active-site residue. ATP is bound at residue P96–S106. D138 is an active-site residue.

It belongs to the GHMP kinase family. IspE subfamily.

It carries out the reaction 4-CDP-2-C-methyl-D-erythritol + ATP = 4-CDP-2-C-methyl-D-erythritol 2-phosphate + ADP + H(+). It participates in isoprenoid biosynthesis; isopentenyl diphosphate biosynthesis via DXP pathway; isopentenyl diphosphate from 1-deoxy-D-xylulose 5-phosphate: step 3/6. Catalyzes the phosphorylation of the position 2 hydroxy group of 4-diphosphocytidyl-2C-methyl-D-erythritol. The chain is 4-diphosphocytidyl-2-C-methyl-D-erythritol kinase from Pseudoalteromonas atlantica (strain T6c / ATCC BAA-1087).